The primary structure comprises 152 residues: Protein SprT-like (152 aa).

Positions 7 to 148 (QRLVEEVSLQ…GKCKGKLILI (142 aa)) constitute a SprT-like domain. His67 lines the Zn(2+) pocket. Glu68 is an active-site residue. Position 71 (His71) interacts with Zn(2+).

This sequence belongs to the SprT family. Zn(2+) is required as a cofactor.

It localises to the cytoplasm. The sequence is that of Protein SprT-like from Bacillus cereus (strain ATCC 10987 / NRS 248).